The primary structure comprises 32 residues: Cytochrome b6-f complex subunit 7 (32 aa).

The helical transmembrane segment at 9 to 27 (AAVFWILIPIGLVGGALLL) threads the bilayer.

The protein belongs to the PetM family. The 4 large subunits of the cytochrome b6-f complex are cytochrome b6, subunit IV (17 kDa polypeptide, PetD), cytochrome f and the Rieske protein, while the 4 small subunits are PetG, PetL, PetM and PetN. The complex functions as a dimer.

It is found in the cellular thylakoid membrane. Its function is as follows. Component of the cytochrome b6-f complex, which mediates electron transfer between photosystem II (PSII) and photosystem I (PSI), cyclic electron flow around PSI, and state transitions. This is Cytochrome b6-f complex subunit 7 from Prochlorococcus marinus (strain MIT 9515).